The primary structure comprises 1059 residues: Ubiquitin carboxyl-terminal hydrolase 36 (1059 aa).

Disordered regions lie at residues 24-49 (VGNGSRAADEAKKTGGGGGDDSDSEM) and 94-148 (SNNN…KPKR). Over residues 94–123 (SNNNNSSSCNGSNFGNSKVVGANGHDNGNN) the composition is skewed to low complexity. Residues 130-139 (QSESTQSGPS) show a composition bias toward polar residues. In terms of domain architecture, USP spans 171–479 (TGMINVGNTC…NAYIMFYELD (309 aa)). Residue C180 is the Nucleophile of the active site. Catalysis depends on H438, which acts as the Proton acceptor. Positions 505–673 (TVSSSSPTHT…KTPLKSSVKT (169 aa)) are disordered. Residues S508 and S510 each carry the phosphoserine modification. The span at 528–539 (GYSNGHATGSSN) shows a compositional bias: polar residues. Composition is skewed to low complexity over residues 540–560 (AQKTAIQFKQQQQHPQQNGLQ), 592–611 (NGNKSSSSSASNSNHNKSVN), and 633–647 (ATATATATATARPTA). The segment covering 655–664 (MTEDSSDKPK) has biased composition (basic and acidic residues). T673 and T682 each carry phosphothreonine. Disordered regions lie at residues 687–893 (LVPY…EAST), 926–998 (KELV…RYHN), and 1012–1059 (KYNR…QSSS). 2 positions are modified to phosphoserine: S692 and S694. Low complexity-rich tracts occupy residues 729–739 (TKTNGGSLTNG) and 752–765 (SSSSSLASASASAA). S766 carries the phosphoserine modification. The span at 766–776 (SDDEDADEEEE) shows a compositional bias: acidic residues. Residues 779–795 (KLTNGWQPQKQSQSLTQ) show a composition bias toward polar residues. A compositionally biased stretch (pro residues) spans 799–808 (PPSPKTPPSP). Residue S801 is modified to Phosphoserine. T804 carries the post-translational modification Phosphothreonine. S807 carries the post-translational modification Phosphoserine. A compositionally biased stretch (acidic residues) spans 825–839 (DNEDEDDDDDEDEEE). 2 stretches are compositionally biased toward polar residues: residues 842 to 862 (QVVSTPSKNPRNPFAKSSTTP) and 876 to 893 (KSQQQPRVGNGYQSEAST). T846 and T861 each carry phosphothreonine. Residues 926 to 940 (KELVAEAREQRQHDH) show a composition bias toward basic and acidic residues. The span at 1048 to 1059 (QQQQQQSQQSSS) shows a compositional bias: low complexity.

This sequence belongs to the peptidase C19 family. As to quaternary structure, interacts with atms/PAF1, but not with CycT.

It localises to the nucleus. The protein resides in the nucleolus. The enzyme catalyses Thiol-dependent hydrolysis of ester, thioester, amide, peptide and isopeptide bonds formed by the C-terminal Gly of ubiquitin (a 76-residue protein attached to proteins as an intracellular targeting signal).. Functionally, required for maintaining multiple types of adult stem cells, including male and female germline, epithelial follicle cell and intestinal stem cells. May function as a transcriptional repressor by continually deubiquiting histone H2B at the promoters of genes critical for cellular differentiation, thereby preventing histone H3 'Lys-4' trimethylation (H3K4). Controls selective autophagy activation by ubiquitinated proteins. This chain is Ubiquitin carboxyl-terminal hydrolase 36 (Usp36), found in Drosophila pseudoobscura pseudoobscura (Fruit fly).